A 612-amino-acid polypeptide reads, in one-letter code: DNA damage checkpoint protein 1 (612 aa).

Residue Ser-436 is modified to Phosphoserine. Residues 576–612 are disordered; that stretch reads GLLNSQNDTSNHKKQDNKEMEDGLGLTQVEKPRGIFD. The segment covering 585–596 has biased composition (basic and acidic residues); the sequence is SNHKKQDNKEME.

This sequence belongs to the DDC1 family. In terms of assembly, component of the checkpoint clamp complex composed of DDC1, MEC3 and RAD17. The interaction with MEC3 is performed in a RAD17-dependent manner. The checkpoint clamp complex loads onto DNA in an ATP-dependent manner through its interaction with the RFC-RAD4 checkpoint clamp loader complex. Interacts with the DNA polymerase zeta subunit REV7 and DPB11. In terms of processing, phosphorylated during cell cycle S-phase and in response to DNA damage. This phosphorylation is MEC14 dependent. Also hosphorylated by CDC28.

It is found in the cytoplasm. The protein localises to the nucleus. Component of the checkpoint clamp complex involved in the surveillance mechanism that allows the DNA repair pathways to act to restore the integrity of the DNA prior to DNA synthesis or separation of the replicated chromosomes. Associates with sites of DNA damage and modulates the MEC1 signaling pathway and the activation of RAD53 in response to DNA damage at phase G1. The complex also physically regulates DNA polymerase zeta-dependent mutagenesis by controlling the access of polymerase zeta to damaged DNA. The polypeptide is DNA damage checkpoint protein 1 (DDC1) (Saccharomyces cerevisiae (strain ATCC 204508 / S288c) (Baker's yeast)).